The chain runs to 269 residues: Hydroxyacylglutathione hydrolase (269 aa).

7 residues coordinate Zn(2+): histidine 56, histidine 58, aspartate 60, histidine 61, histidine 115, aspartate 137, and histidine 177.

This sequence belongs to the metallo-beta-lactamase superfamily. Glyoxalase II family. Monomer. Zn(2+) serves as cofactor.

It catalyses the reaction an S-(2-hydroxyacyl)glutathione + H2O = a 2-hydroxy carboxylate + glutathione + H(+). Its pathway is secondary metabolite metabolism; methylglyoxal degradation; (R)-lactate from methylglyoxal: step 2/2. In terms of biological role, thiolesterase that catalyzes the hydrolysis of S-D-lactoyl-glutathione to form glutathione and D-lactic acid. This is Hydroxyacylglutathione hydrolase from Leptospira borgpetersenii serovar Hardjo-bovis (strain JB197).